The chain runs to 318 residues: Glycine--tRNA ligase alpha subunit (318 aa).

The protein belongs to the class-II aminoacyl-tRNA synthetase family. Tetramer of two alpha and two beta subunits.

Its subcellular location is the cytoplasm. It carries out the reaction tRNA(Gly) + glycine + ATP = glycyl-tRNA(Gly) + AMP + diphosphate. The sequence is that of Glycine--tRNA ligase alpha subunit from Saccharophagus degradans (strain 2-40 / ATCC 43961 / DSM 17024).